The chain runs to 1294 residues: Unconventional myosin-VI (1294 aa).

Residues 2-53 (EDGKPVWAPHPTDGFQMGNIVDIGPDSLTIEPLNQKGKTFLALINQVFPAEE) enclose the Myosin N-terminal SH3-like domain. The Myosin motor domain occupies 57–771 (KDVEDNCSLM…KFAEFDQIMK (715 aa)). Residue 151 to 158 (GESGAGKT) coordinates ATP. Residue S267 is modified to Phosphoserine. Positions 273-317 (YLNRGCTRYFANKETDKQILQNRKSPEYLKAGSMKDPLLDDHGDF) are responsible for slow ATPase activity. T405 carries the post-translational modification Phosphothreonine. At S604 the chain carries Phosphoserine. Positions 665–672 (FIRCIKPN) are actin-binding. The required for binding calmodulin stretch occupies residues 782-810 (KRVNHWLTCSRWKKVQWCSLSVIKLKNKI). One can recognise an IQ domain in the interval 814–834 (AEACIKMQKTIRMWLCKRRHK). Residues 835–916 (PRIDGLVKVG…EELLSALQKK (82 aa)) are three-helix bundle. The interval 917 to 984 (KQQEEEAERL…EDDEKRIQAE (68 aa)) is SAH. Residues 934-955 (EKERKRREEDEKRRRKEEEERR) are disordered. S1025 carries the phosphoserine modification. Residues 1060–1285 (KEMSEFLSRG…ESRQARPTYA (226 aa)) form an interaction with TAX1BP1 and CALCOCO2/NDP52 region. The interaction with OPTN stretch occupies residues 1116–1118 (RRL). Position 1155 is a phosphoserine (S1155). The interval 1157-1285 (QQNPAAQIPA…ESRQARPTYA (129 aa)) is interaction with TOM1.

Belongs to the TRAFAC class myosin-kinesin ATPase superfamily. Myosin family. Homodimer; dimerization seems to implicate the unfolding of the three-helix bundle region creating an additional calmodulin binding site, and cargo binding. Able to function as a monomer under specific conditions in vitro. Forms a complex with CFTR and DAB2 in the apical membrane of epithelial cells. Component of the DISP/DOCK7-induced septin displacement complex, at least composed of DOCK7, LRCH3 and MYO6. Binding to calmodulin through a unique insert, not found in other myosins, located in the neck region between the motor domain and the IQ domain appears to contribute to the directionality reversal. This interaction occurs only if the C-terminal lobe of calmodulin is occupied by calcium. Interaction with F-actin/ACTN1 occurs only at the apical brush border domain of the proximal tubule cells. Interacts with DAB2. In vitro, the C-terminal globular tail binds a C-terminal region of DAB2. Interacts with CFTR. Interacts with CABP5. Interacts with TOM1. Interacts with OPTN. Interacts with TAX1BP1 and CALCOCO2/NDP52. Interacts with TOM1L2. Interacts with CLIC5; may work together in a complex which also includes RDX and MYO6 to stabilize linkages between the plasma membrane and subjacent actin cytoskeleton at the base of stereocilia. Phosphorylation in the motor domain, induced by EGF, results in translocation of MYO6 from the cell surface to membrane ruffles and affects F-actin dynamics. Phosphorylated in vitro by p21-activated kinase (PAK). As to expression, expressed in most tissues examined including heart, brain, placenta, pancreas, spleen, thymus, prostate, testis, ovary, small intestine and colon. Highest levels in brain, pancreas, testis and small intestine. Also expressed in fetal brain and cochlea. Isoform 1 and isoform 2, containing the small insert, and isoform 4, containing neither insert, are expressed in unpolarized epithelial cells.

Its subcellular location is the golgi apparatus. The protein localises to the trans-Golgi network membrane. It localises to the nucleus. It is found in the cytoplasm. The protein resides in the perinuclear region. Its subcellular location is the membrane. The protein localises to the clathrin-coated pit. It localises to the cytoplasmic vesicle. It is found in the clathrin-coated vesicle. The protein resides in the cell projection. Its subcellular location is the filopodium. The protein localises to the ruffle membrane. It localises to the microvillus. It is found in the cytosol. The protein resides in the autophagosome. Its subcellular location is the endosome. The protein localises to the clathrin-coated vesicle membrane. Its function is as follows. Myosins are actin-based motor molecules with ATPase activity. Unconventional myosins serve in intracellular movements. Myosin 6 is a reverse-direction motor protein that moves towards the minus-end of actin filaments. Has slow rate of actin-activated ADP release due to weak ATP binding. Functions in a variety of intracellular processes such as vesicular membrane trafficking and cell migration. Required for the structural integrity of the Golgi apparatus via the p53-dependent pro-survival pathway. Appears to be involved in a very early step of clathrin-mediated endocytosis in polarized epithelial cells. Together with TOM1, mediates delivery of endocytic cargo to autophagosomes thereby promoting autophagosome maturation and driving fusion with lysosomes. Links TOM1 with autophagy receptors, such as TAX1BP1; CALCOCO2/NDP52 and OPTN. May act as a regulator of F-actin dynamics. As part of the DISP complex, may regulate the association of septins with actin and thereby regulate the actin cytoskeleton. May play a role in transporting DAB2 from the plasma membrane to specific cellular targets. May play a role in the extension and network organization of neurites. Required for structural integrity of inner ear hair cells. Required for the correct localization of CLIC5 and RDX at the stereocilium base. Modulates RNA polymerase II-dependent transcription. This Homo sapiens (Human) protein is Unconventional myosin-VI.